A 115-amino-acid chain; its full sequence is DNA-directed RNA polymerase II subunit RPB11-b1 (115 aa).

This sequence belongs to the archaeal Rpo11/eukaryotic RPB11/RPC19 RNA polymerase subunit family. As to quaternary structure, component of the RNA polymerase II (Pol II) complex consisting of 12 subunits. In terms of tissue distribution, ubiquitously expressed.

It is found in the nucleus. Its function is as follows. DNA-dependent RNA polymerase catalyzes the transcription of DNA into RNA using the four ribonucleoside triphosphates as substrates. Component of RNA polymerase II which synthesizes mRNA precursors and many functional non-coding RNAs. Pol II is the central component of the basal RNA polymerase II transcription machinery. It is composed of mobile elements that move relative to each other. RPB11 is part of the core element with the central large cleft. The polypeptide is DNA-directed RNA polymerase II subunit RPB11-b1 (POLR2J2) (Homo sapiens (Human)).